Reading from the N-terminus, the 137-residue chain is Nucleoside diphosphate kinase (137 aa).

Residues Lys-9, Phe-57, Arg-85, Thr-91, Arg-102, and Asn-112 each contribute to the ATP site. His-115 functions as the Pros-phosphohistidine intermediate in the catalytic mechanism.

It belongs to the NDK family. Homotetramer. Mg(2+) is required as a cofactor.

Its subcellular location is the cytoplasm. It catalyses the reaction a 2'-deoxyribonucleoside 5'-diphosphate + ATP = a 2'-deoxyribonucleoside 5'-triphosphate + ADP. It carries out the reaction a ribonucleoside 5'-diphosphate + ATP = a ribonucleoside 5'-triphosphate + ADP. In terms of biological role, major role in the synthesis of nucleoside triphosphates other than ATP. The ATP gamma phosphate is transferred to the NDP beta phosphate via a ping-pong mechanism, using a phosphorylated active-site intermediate. This Sulfurimonas denitrificans (strain ATCC 33889 / DSM 1251) (Thiomicrospira denitrificans (strain ATCC 33889 / DSM 1251)) protein is Nucleoside diphosphate kinase.